The chain runs to 450 residues: ATP-dependent protease ATPase subunit HslU (450 aa).

ATP is bound by residues V29, 71–76 (GVGKTE), D261, E328, and R400.

It belongs to the ClpX chaperone family. HslU subfamily. A double ring-shaped homohexamer of HslV is capped on each side by a ring-shaped HslU homohexamer. The assembly of the HslU/HslV complex is dependent on binding of ATP.

The protein resides in the cytoplasm. Its function is as follows. ATPase subunit of a proteasome-like degradation complex; this subunit has chaperone activity. The binding of ATP and its subsequent hydrolysis by HslU are essential for unfolding of protein substrates subsequently hydrolyzed by HslV. HslU recognizes the N-terminal part of its protein substrates and unfolds these before they are guided to HslV for hydrolysis. This is ATP-dependent protease ATPase subunit HslU from Rickettsia peacockii (strain Rustic).